Reading from the N-terminus, the 411-residue chain is Argininosuccinate lyase (411 aa).

The protein belongs to the lyase 1 family. Argininosuccinate lyase subfamily.

The protein resides in the cytoplasm. It carries out the reaction 2-(N(omega)-L-arginino)succinate = fumarate + L-arginine. It functions in the pathway amino-acid biosynthesis; L-arginine biosynthesis; L-arginine from L-ornithine and carbamoyl phosphate: step 3/3. The protein is Argininosuccinate lyase of Legionella pneumophila (strain Lens).